Consider the following 705-residue polypeptide: Choline transporter-like protein 2 (705 aa).

Residues 1–31 are Cytoplasmic-facing; sequence MEDQRKYGAYGTPQKYDPTFKGPIYNRGCTD. Threonine 12 carries the post-translational modification Phosphothreonine. A helical transmembrane segment spans residues 32–52; sequence VLCCVLLFLAIVGYVAVGLIA. Over 53 to 231 the chain is Extracellular; the sequence is WTHGDPRKVI…RIFEDYTVSW (179 aa). Residues asparagine 186 and asparagine 199 are each glycosylated (N-linked (GlcNAc...) asparagine). A helical transmembrane segment spans residues 232 to 252; it reads YWIVIGLVIAMVLSLLFIILL. Topologically, residues 253 to 255 are cytoplasmic; that stretch reads RFL. The helical transmembrane segment at 256–276 threads the bilayer; that stretch reads AGIMVWVMIVLVILVLGYGIF. Residues 277-314 lie on the Extracellular side of the membrane; that stretch reads HCYMEYARLRGEAGSDISVLDLGFQTDFRVYLHLRQTW. The chain crosses the membrane as a helical span at residues 315–335; sequence LAFMIILSILEVIIILLLIFL. Residues 336–363 are Cytoplasmic-facing; the sequence is RKRILIAIALIKEASRAVGYVMCSLLYP. Residues 364–384 traverse the membrane as a helical segment; that stretch reads LVTFFLLCLCIAYWASTAVFL. Residues 385-455 lie on the Extracellular side of the membrane; that stretch reads STSNEAVYKI…IFNAFMFFWL (71 aa). Asparagine 414 is a glycosylation site (N-linked (GlcNAc...) asparagine). Residues 456-478 form a helical membrane-spanning segment; it reads ANFVLALGQVTLAGAFASYYWAL. Topologically, residues 479–503 are cytoplasmic; the sequence is RKPDDMPAFPLFAAFGRALRYHTGS. The chain crosses the membrane as a helical span at residues 504-524; that stretch reads LAFGSLILAIVQIIRVILEYL. Residues 525–562 are Extracellular-facing; that stretch reads DQRLKAAENKFAKFLMTCLKCCFWCLEKFIKFLNRNAY. Residues 563–583 form a helical membrane-spanning segment; it reads IMIAIYGTNFCTSARNAFFLL. Residues 584–598 lie on the Cytoplasmic side of the membrane; the sequence is MRNIIRVAVLDKVTD. Residues 599-619 traverse the membrane as a helical segment; sequence FLFLLGKLLIVGSVGILAFFF. Residues 620-637 lie on the Extracellular side of the membrane; sequence FTHRIRIVQDTAPPLNYY. A helical transmembrane segment spans residues 638–658; it reads WVPILTVIVGSYLIAHGFFSV. The Cytoplasmic portion of the chain corresponds to 659–705; it reads YGMCVDTLFLCFLEDLERNNGSSERPYFMSSTLKKLLNKTNKKPVES.

It belongs to the CTL (choline transporter-like) family. In terms of assembly, interacts with COCH. N-glycosylated; contains sialic acid. Not O-glycosylated. In terms of tissue distribution, expressed at high levels in lung, colon and in supporting cells of the inner ear (at protein level). Progressively lower levels in brain, tongue, liver and kidney (at protein level). In the tongue, strongly expressed in epithelial cells and in nerves within the musculature. Within the nerves, expression observed in the perineurial cells of the nerve sheath, in the Schwann cells and myelinated nerve fibers (at protein level). In the kidney, prominent expression in glomeruli in the lining of Bowman's capsule and on the mesangial cells adjacent to the vessels within the glomerulus (at protein level). Strongly expressed on the membranes of splenocytes (at protein level).

It localises to the cell membrane. Its subcellular location is the mitochondrion outer membrane. It catalyses the reaction choline(out) + n H(+)(in) = choline(in) + n H(+)(out). The catalysed reaction is ethanolamine(out) + n H(+)(in) = ethanolamine(in) + n H(+)(out). In terms of biological role, choline/H+ antiporter, mainly in mitochodria. Also acts as a low-affinity ethanolamine/H+ antiporter, regulating the supply of extracellular ethanolamine (Etn) for the CDP-Etn pathway, redistribute intracellular Etn and balance the CDP-Cho and CDP-Etn arms of the Kennedy pathway. This Cavia porcellus (Guinea pig) protein is Choline transporter-like protein 2 (SLC44A2).